The chain runs to 222 residues: Cytochrome b6 (222 aa).

A helical membrane pass occupies residues 39-59 (IFYCLGGITLVCFIIQFATGF). Position 42 (Cys42) interacts with heme c. Heme b contacts are provided by His93 and His107. 3 helical membrane-spanning segments follow: residues 97–117 (ASMM…TGGF), 123–143 (LTWI…VTGY), and 193–213 (LHTF…FLMI). 2 residues coordinate heme b: His194 and His209.

It belongs to the cytochrome b family. PetB subfamily. As to quaternary structure, the 4 large subunits of the cytochrome b6-f complex are cytochrome b6, subunit IV (17 kDa polypeptide, PetD), cytochrome f and the Rieske protein, while the 4 small subunits are PetG, PetL, PetM and PetN. The complex functions as a dimer. The cofactor is heme b. Requires heme c as cofactor.

It is found in the cellular thylakoid membrane. Functionally, component of the cytochrome b6-f complex, which mediates electron transfer between photosystem II (PSII) and photosystem I (PSI), cyclic electron flow around PSI, and state transitions. The polypeptide is Cytochrome b6 (Prochlorothrix hollandica).